An 85-amino-acid polypeptide reads, in one-letter code: Toxin TdNa8 (85 aa).

The first 19 residues, M1–S19, serve as a signal peptide directing secretion. Residues K21–R81 form the LCN-type CS-alpha/beta domain. 4 disulfides stabilise this stretch: C31–C80, C35–C56, C42–C63, and C46–C65. At P82 the chain carries Proline amide.

It belongs to the long (4 C-C) scorpion toxin superfamily. Sodium channel inhibitor family. Alpha subfamily. In terms of tissue distribution, expressed by the venom gland.

The protein resides in the secreted. In terms of biological role, alpha toxins bind voltage-independently at site-3 of sodium channels (Nav) and inhibit the inactivation of the activated channels, thereby blocking neuronal transmission. This Tityus discrepans (Venezuelan scorpion) protein is Toxin TdNa8.